Reading from the N-terminus, the 312-residue chain is MIEFEKPNITKIDENKDYGKFVVEPLERGYGTTLGNSLRRVLLASLPGAAVTSINIEGVLHEFDTIPGVREDVMQIILNIKGIAVKSYVQDEKMIELDVEGPAEITAGDILTDSDIEIVNPDHYLFTIGEGARFKAVMTVNSGRGYVPADQNKRDDAPVGTLAVDSIYTPVTKVNYQVEPARVGSNDGFDKLTLEIMTNGTIIPEDALGLSARILTEHLDLFTDLTEVAKATDVMKEVDKSSDDHVLERTIEELDLSVRSYNCLKRAGINTVYDLTEKTEPEMMKVRNLGRKSLEEVKIKLTDLGLGLKNDK.

The alpha N-terminal domain (alpha-NTD) stretch occupies residues 1 to 226; the sequence is MIEFEKPNIT…EHLDLFTDLT (226 aa). An alpha C-terminal domain (alpha-CTD) region spans residues 244–312; the sequence is DHVLERTIEE…DLGLGLKNDK (69 aa).

It belongs to the RNA polymerase alpha chain family. In terms of assembly, homodimer. The RNAP catalytic core consists of 2 alpha, 1 beta, 1 beta' and 1 omega subunit. When a sigma factor is associated with the core the holoenzyme is formed, which can initiate transcription.

The catalysed reaction is RNA(n) + a ribonucleoside 5'-triphosphate = RNA(n+1) + diphosphate. DNA-dependent RNA polymerase catalyzes the transcription of DNA into RNA using the four ribonucleoside triphosphates as substrates. This is DNA-directed RNA polymerase subunit alpha from Streptococcus gordonii (strain Challis / ATCC 35105 / BCRC 15272 / CH1 / DL1 / V288).